Here is a 291-residue protein sequence, read N- to C-terminus: Bifunctional protein FolD (291 aa).

Residues 165–167 (GRS), serine 190, and isoleucine 231 contribute to the NADP(+) site.

It belongs to the tetrahydrofolate dehydrogenase/cyclohydrolase family. In terms of assembly, homodimer.

The enzyme catalyses (6R)-5,10-methylene-5,6,7,8-tetrahydrofolate + NADP(+) = (6R)-5,10-methenyltetrahydrofolate + NADPH. It catalyses the reaction (6R)-5,10-methenyltetrahydrofolate + H2O = (6R)-10-formyltetrahydrofolate + H(+). Its pathway is one-carbon metabolism; tetrahydrofolate interconversion. Functionally, catalyzes the oxidation of 5,10-methylenetetrahydrofolate to 5,10-methenyltetrahydrofolate and then the hydrolysis of 5,10-methenyltetrahydrofolate to 10-formyltetrahydrofolate. This is Bifunctional protein FolD from Azoarcus sp. (strain BH72).